Consider the following 92-residue polypeptide: Small ribosomal subunit protein uS19 (92 aa).

The protein belongs to the universal ribosomal protein uS19 family.

In terms of biological role, protein S19 forms a complex with S13 that binds strongly to the 16S ribosomal RNA. In Desulfosudis oleivorans (strain DSM 6200 / JCM 39069 / Hxd3) (Desulfococcus oleovorans), this protein is Small ribosomal subunit protein uS19.